The sequence spans 466 residues: Glutamate--tRNA ligase 2 (466 aa).

A 'HIGH' region motif is present at residues 9–19 (PSPTGYLHVGG). The 'KMSKS' region motif lies at 234 to 238 (PLSKR). K237 lines the ATP pocket.

It belongs to the class-I aminoacyl-tRNA synthetase family. Glutamate--tRNA ligase type 1 subfamily. Monomer.

Its subcellular location is the cytoplasm. The catalysed reaction is tRNA(Glu) + L-glutamate + ATP = L-glutamyl-tRNA(Glu) + AMP + diphosphate. Functionally, catalyzes the attachment of glutamate to tRNA(Glu) in a two-step reaction: glutamate is first activated by ATP to form Glu-AMP and then transferred to the acceptor end of tRNA(Glu). The sequence is that of Glutamate--tRNA ligase 2 from Pseudothermotoga lettingae (strain ATCC BAA-301 / DSM 14385 / NBRC 107922 / TMO) (Thermotoga lettingae).